The primary structure comprises 346 residues: Pyrophosphate--fructose 6-phosphate 1-phosphotransferase (346 aa).

Gly-13 provides a ligand contact to diphosphate. Residue Glu-105 participates in Mg(2+) binding. Substrate-binding positions include 127-129, Arg-164, 171-173, Glu-224, Arg-269, and 275-278; these read TID, MGR, and HLQR. Asp-129 serves as the catalytic Proton acceptor.

The protein belongs to the phosphofructokinase type A (PFKA) family. Mixed-substrate PFK group III subfamily. Homodimer. Mg(2+) serves as cofactor.

The protein localises to the cytoplasm. It carries out the reaction beta-D-fructose 6-phosphate + diphosphate = beta-D-fructose 1,6-bisphosphate + phosphate + H(+). Its pathway is carbohydrate degradation; glycolysis; D-glyceraldehyde 3-phosphate and glycerone phosphate from D-glucose: step 3/4. Its activity is regulated as follows. Non-allosteric. Catalyzes the phosphorylation of D-fructose 6-phosphate, the first committing step of glycolysis. Uses inorganic phosphate (PPi) as phosphoryl donor instead of ATP like common ATP-dependent phosphofructokinases (ATP-PFKs), which renders the reaction reversible, and can thus function both in glycolysis and gluconeogenesis. Consistently, PPi-PFK can replace the enzymes of both the forward (ATP-PFK) and reverse (fructose-bisphosphatase (FBPase)) reactions. The polypeptide is Pyrophosphate--fructose 6-phosphate 1-phosphotransferase (Dictyoglomus thermophilum).